Consider the following 151-residue polypeptide: Ribosomal RNA large subunit methyltransferase H (151 aa).

Residues alanine 101 and 119–124 contribute to the S-adenosyl-L-methionine site; that span reads LSEMTF.

The protein belongs to the RNA methyltransferase RlmH family. Homodimer.

It is found in the cytoplasm. The catalysed reaction is pseudouridine(1915) in 23S rRNA + S-adenosyl-L-methionine = N(3)-methylpseudouridine(1915) in 23S rRNA + S-adenosyl-L-homocysteine + H(+). Specifically methylates the pseudouridine at position 1915 (m3Psi1915) in 23S rRNA. The protein is Ribosomal RNA large subunit methyltransferase H of Helicobacter pylori (strain G27).